The chain runs to 180 residues: Cytokinin-beta-glucosidase 2 (180 aa).

Functionally, hydrolyzes cytokinin glucosides thus liberating free cytokinins. The protein is Cytokinin-beta-glucosidase 2 (ROLC2) of Linaria vulgaris (Toadflax).